A 375-amino-acid chain; its full sequence is Queuine tRNA-ribosyltransferase (375 aa).

Catalysis depends on Asp-89, which acts as the Proton acceptor. Residues 89-93, Asp-143, Gln-187, and Gly-214 each bind substrate; that span reads DSGGF. The segment at 245–251 is RNA binding; sequence GVGKPED. Asp-264 functions as the Nucleophile in the catalytic mechanism. The tract at residues 269 to 273 is RNA binding; important for wobble base 34 recognition; it reads TRNAR. Zn(2+)-binding residues include Cys-302, Cys-304, Cys-307, and His-333.

This sequence belongs to the queuine tRNA-ribosyltransferase family. As to quaternary structure, homodimer. Within each dimer, one monomer is responsible for RNA recognition and catalysis, while the other monomer binds to the replacement base PreQ1. It depends on Zn(2+) as a cofactor.

The catalysed reaction is 7-aminomethyl-7-carbaguanine + guanosine(34) in tRNA = 7-aminomethyl-7-carbaguanosine(34) in tRNA + guanine. The protein operates within tRNA modification; tRNA-queuosine biosynthesis. Its function is as follows. Catalyzes the base-exchange of a guanine (G) residue with the queuine precursor 7-aminomethyl-7-deazaguanine (PreQ1) at position 34 (anticodon wobble position) in tRNAs with GU(N) anticodons (tRNA-Asp, -Asn, -His and -Tyr). Catalysis occurs through a double-displacement mechanism. The nucleophile active site attacks the C1' of nucleotide 34 to detach the guanine base from the RNA, forming a covalent enzyme-RNA intermediate. The proton acceptor active site deprotonates the incoming PreQ1, allowing a nucleophilic attack on the C1' of the ribose to form the product. After dissociation, two additional enzymatic reactions on the tRNA convert PreQ1 to queuine (Q), resulting in the hypermodified nucleoside queuosine (7-(((4,5-cis-dihydroxy-2-cyclopenten-1-yl)amino)methyl)-7-deazaguanosine). The chain is Queuine tRNA-ribosyltransferase from Salmonella arizonae (strain ATCC BAA-731 / CDC346-86 / RSK2980).